A 359-amino-acid chain; its full sequence is Phospho-N-acetylmuramoyl-pentapeptide-transferase (359 aa).

10 helical membrane passes run 3 to 23 (QILV…PALI), 55 to 75 (VAIV…GLAF), 80 to 100 (VSAS…VGFL), 117 to 137 (TAKT…VLQF), 156 to 176 (IATV…IVSA), 187 to 207 (LDGL…LITF), 231 to 251 (LTLI…WNAA), 255 to 275 (IFMG…LSVT), 280 to 300 (ILAV…VLQI), and 334 to 354 (FWLL…GEWL).

The protein belongs to the glycosyltransferase 4 family. MraY subfamily. Mg(2+) serves as cofactor.

It localises to the cell membrane. The enzyme catalyses UDP-N-acetyl-alpha-D-muramoyl-L-alanyl-gamma-D-glutamyl-meso-2,6-diaminopimeloyl-D-alanyl-D-alanine + di-trans,octa-cis-undecaprenyl phosphate = di-trans,octa-cis-undecaprenyl diphospho-N-acetyl-alpha-D-muramoyl-L-alanyl-D-glutamyl-meso-2,6-diaminopimeloyl-D-alanyl-D-alanine + UMP. Its pathway is cell wall biogenesis; peptidoglycan biosynthesis. Functionally, catalyzes the initial step of the lipid cycle reactions in the biosynthesis of the cell wall peptidoglycan: transfers peptidoglycan precursor phospho-MurNAc-pentapeptide from UDP-MurNAc-pentapeptide onto the lipid carrier undecaprenyl phosphate, yielding undecaprenyl-pyrophosphoryl-MurNAc-pentapeptide, known as lipid I. This Mycobacterium leprae (strain TN) protein is Phospho-N-acetylmuramoyl-pentapeptide-transferase.